Here is a 513-residue protein sequence, read N- to C-terminus: ATP synthase subunit alpha (513 aa).

Residue 169–176 (GDRQIGKT) participates in ATP binding.

The protein belongs to the ATPase alpha/beta chains family. F-type ATPases have 2 components, CF(1) - the catalytic core - and CF(0) - the membrane proton channel. CF(1) has five subunits: alpha(3), beta(3), gamma(1), delta(1), epsilon(1). CF(0) has three main subunits: a(1), b(2) and c(9-12). The alpha and beta chains form an alternating ring which encloses part of the gamma chain. CF(1) is attached to CF(0) by a central stalk formed by the gamma and epsilon chains, while a peripheral stalk is formed by the delta and b chains.

The protein localises to the cell inner membrane. It carries out the reaction ATP + H2O + 4 H(+)(in) = ADP + phosphate + 5 H(+)(out). Produces ATP from ADP in the presence of a proton gradient across the membrane. The alpha chain is a regulatory subunit. In Francisella philomiragia subsp. philomiragia (strain ATCC 25017 / CCUG 19701 / FSC 153 / O#319-036), this protein is ATP synthase subunit alpha.